The primary structure comprises 847 residues: Bifunctional protein argC, mitochondrial (847 aa).

Positions Q100–S331 are acetylglutamate kinase. The N-acetyltransferase domain maps to G352–S508. Residues F531 to E846 are N-acetyl-gamma-glutamyl-phosphate reductase. Residue C665 is part of the active site.

In the N-terminal section; belongs to the acetylglutamate kinase family. It in the C-terminal section; belongs to the NAGSA dehydrogenase family.

It is found in the mitochondrion. The catalysed reaction is N-acetyl-L-glutamate 5-semialdehyde + phosphate + NADP(+) = N-acetyl-L-glutamyl 5-phosphate + NADPH + H(+). It carries out the reaction N-acetyl-L-glutamate + ATP = N-acetyl-L-glutamyl 5-phosphate + ADP. It participates in amino-acid biosynthesis; L-arginine biosynthesis; N(2)-acetyl-L-ornithine from L-glutamate: step 2/4. It functions in the pathway amino-acid biosynthesis; L-arginine biosynthesis; N(2)-acetyl-L-ornithine from L-glutamate: step 3/4. The protein is Bifunctional protein argC, mitochondrial (argC) of Dictyostelium discoideum (Social amoeba).